Here is a 314-residue protein sequence, read N- to C-terminus: Peroxidase 2 (314 aa).

Residues 1–23 form the signal peptide; sequence MASASSVSLMLLVAAAMASAASA. Gln24 bears the Pyrrolidone carboxylic acid mark. 4 disulfides stabilise this stretch: Cys34–Cys109, Cys67–Cys72, Cys115–Cys310, and Cys194–Cys219. His65 functions as the Proton acceptor in the catalytic mechanism. Residues Asp66, Val69, Gly71, Asp73, and Ser75 each contribute to the Ca(2+) site. N-linked (GlcNAc...) asparagine glycosylation occurs at Asn148. Residue Pro157 coordinates substrate. N-linked (GlcNAc...) asparagine glycosylation is present at Asn169. Position 187 (His187) interacts with heme b. Thr188 provides a ligand contact to Ca(2+). An N-linked (GlcNAc...) asparagine glycan is attached at Asn203. Residues Asp234, Thr237, and Asp242 each contribute to the Ca(2+) site. N-linked (GlcNAc...) asparagine glycosylation is found at Asn274 and Asn309.

Belongs to the peroxidase family. Classical plant (class III) peroxidase subfamily. The cofactor is Ca(2+). Heme b is required as a cofactor.

It localises to the secreted. It catalyses the reaction 2 a phenolic donor + H2O2 = 2 a phenolic radical donor + 2 H2O. Its function is as follows. Removal of H(2)O(2), oxidation of toxic reductants, biosynthesis and degradation of lignin, suberization, auxin catabolism, response to environmental stresses such as wounding, pathogen attack and oxidative stress. These functions might be dependent on each isozyme/isoform in each plant tissue. The sequence is that of Peroxidase 2 (PRX112) from Oryza sativa subsp. japonica (Rice).